The chain runs to 68 residues: Large ribosomal subunit protein bL31 (68 aa).

The Zn(2+) site is built by Cys-16, Cys-18, Cys-36, and Cys-39.

Belongs to the bacterial ribosomal protein bL31 family. Type A subfamily. Part of the 50S ribosomal subunit. Zn(2+) serves as cofactor.

In terms of biological role, binds the 23S rRNA. This is Large ribosomal subunit protein bL31 from Lachnospira eligens (strain ATCC 27750 / DSM 3376 / VPI C15-48 / C15-B4) (Eubacterium eligens).